Reading from the N-terminus, the 293-residue chain is Polyamine aminopropyltransferase (293 aa).

Residues 10–244 (HIWFTEYHNN…GFWSFTLASK (235 aa)) enclose the PABS domain. Gln-39 is an S-methyl-5'-thioadenosine binding site. Positions 70 and 94 each coordinate spermidine. Residues Glu-114 and 145–146 (DG) contribute to the S-methyl-5'-thioadenosine site. The active-site Proton acceptor is the Asp-163. Residue 163–166 (DCPD) participates in spermidine binding. Residue Pro-170 coordinates S-methyl-5'-thioadenosine.

Belongs to the spermidine/spermine synthase family. As to quaternary structure, homodimer or homotetramer.

The protein resides in the cytoplasm. It catalyses the reaction S-adenosyl 3-(methylsulfanyl)propylamine + putrescine = S-methyl-5'-thioadenosine + spermidine + H(+). The protein operates within amine and polyamine biosynthesis; spermidine biosynthesis; spermidine from putrescine: step 1/1. Its function is as follows. Catalyzes the irreversible transfer of a propylamine group from the amino donor S-adenosylmethioninamine (decarboxy-AdoMet) to putrescine (1,4-diaminobutane) to yield spermidine. The sequence is that of Polyamine aminopropyltransferase from Methanocaldococcus jannaschii (strain ATCC 43067 / DSM 2661 / JAL-1 / JCM 10045 / NBRC 100440) (Methanococcus jannaschii).